Here is a 217-residue protein sequence, read N- to C-terminus: MNATTAPLPYSTTRLHELAHLLIANIRELAHAGWTPATSSNFSHRLDEQHAAITVSGRDKGRLVEENIMVVDFDGLAVGRPLRPSAETLLHTQLYRRFPEIGCVLHTHSPVQTIASRLYAGSGVIRLEGYELLKAFDGNTTHETAVEVPVFANTQDMQVLAAQVDALLDKQSMWGYLIEGHGLYAWGRNMAEARRHLEAFEFLLHCELELLKLRGTR.

His106 and His108 together coordinate Zn(2+).

The protein belongs to the aldolase class II family. MtnB subfamily. Requires Zn(2+) as cofactor.

The enzyme catalyses 5-(methylsulfanyl)-D-ribulose 1-phosphate = 5-methylsulfanyl-2,3-dioxopentyl phosphate + H2O. It functions in the pathway amino-acid biosynthesis; L-methionine biosynthesis via salvage pathway; L-methionine from S-methyl-5-thio-alpha-D-ribose 1-phosphate: step 2/6. Functionally, catalyzes the dehydration of methylthioribulose-1-phosphate (MTRu-1-P) into 2,3-diketo-5-methylthiopentyl-1-phosphate (DK-MTP-1-P). The protein is Methylthioribulose-1-phosphate dehydratase of Xanthomonas euvesicatoria pv. vesicatoria (strain 85-10) (Xanthomonas campestris pv. vesicatoria).